The following is a 281-amino-acid chain: Nucleotide-binding protein Patl_0571 (281 aa).

8 to 15 (GRSGSGKS) contacts ATP. 56-59 (DVRN) contributes to the GTP binding site.

This sequence belongs to the RapZ-like family.

Displays ATPase and GTPase activities. The protein is Nucleotide-binding protein Patl_0571 of Pseudoalteromonas atlantica (strain T6c / ATCC BAA-1087).